Here is a 156-residue protein sequence, read N- to C-terminus: Arginine repressor (156 aa).

The protein belongs to the ArgR family.

The protein localises to the cytoplasm. The protein operates within amino-acid biosynthesis; L-arginine biosynthesis [regulation]. In terms of biological role, regulates arginine biosynthesis genes. The sequence is that of Arginine repressor from Shewanella halifaxensis (strain HAW-EB4).